The primary structure comprises 636 residues: tRNA 5-methylaminomethyl-2-thiouridine biosynthesis bifunctional protein MnmC (636 aa).

The segment at 1 to 202 is tRNA (mnm(5)s(2)U34)-methyltransferase; the sequence is MTVSKILKQV…ERAALRAQSH (202 aa). The tract at residues 227 to 636 is FAD-dependent cmnm(5)s(2)U34 oxidoreductase; the sequence is IGGGVASACL…GKALEMSGKS (410 aa).

It in the N-terminal section; belongs to the methyltransferase superfamily. tRNA (mnm(5)s(2)U34)-methyltransferase family. The protein in the C-terminal section; belongs to the DAO family. FAD is required as a cofactor.

The protein localises to the cytoplasm. The catalysed reaction is 5-aminomethyl-2-thiouridine(34) in tRNA + S-adenosyl-L-methionine = 5-methylaminomethyl-2-thiouridine(34) in tRNA + S-adenosyl-L-homocysteine + H(+). In terms of biological role, catalyzes the last two steps in the biosynthesis of 5-methylaminomethyl-2-thiouridine (mnm(5)s(2)U) at the wobble position (U34) in tRNA. Catalyzes the FAD-dependent demodification of cmnm(5)s(2)U34 to nm(5)s(2)U34, followed by the transfer of a methyl group from S-adenosyl-L-methionine to nm(5)s(2)U34, to form mnm(5)s(2)U34. This Shewanella halifaxensis (strain HAW-EB4) protein is tRNA 5-methylaminomethyl-2-thiouridine biosynthesis bifunctional protein MnmC.